We begin with the raw amino-acid sequence, 61 residues long: Small ribosomal subunit protein uS14 (61 aa).

Positions 24, 27, 40, and 43 each coordinate Zn(2+).

Belongs to the universal ribosomal protein uS14 family. Zinc-binding uS14 subfamily. Part of the 30S ribosomal subunit. Contacts proteins S3 and S10. The cofactor is Zn(2+).

Its function is as follows. Binds 16S rRNA, required for the assembly of 30S particles and may also be responsible for determining the conformation of the 16S rRNA at the A site. This chain is Small ribosomal subunit protein uS14, found in Mycoplasmopsis agalactiae (strain NCTC 10123 / CIP 59.7 / PG2) (Mycoplasma agalactiae).